Consider the following 304-residue polypeptide: N-acetylmuramic acid 6-phosphate etherase (304 aa).

In terms of domain architecture, SIS spans 62–225 (IVQAFQNGGR…TTASMVMIGK (164 aa)). Glutamate 90 serves as the catalytic Proton donor. Residue glutamate 121 is part of the active site.

Belongs to the GCKR-like family. MurNAc-6-P etherase subfamily. Homodimer.

The catalysed reaction is N-acetyl-D-muramate 6-phosphate + H2O = N-acetyl-D-glucosamine 6-phosphate + (R)-lactate. It participates in amino-sugar metabolism; 1,6-anhydro-N-acetylmuramate degradation. It functions in the pathway amino-sugar metabolism; N-acetylmuramate degradation. The protein operates within cell wall biogenesis; peptidoglycan recycling. In terms of biological role, specifically catalyzes the cleavage of the D-lactyl ether substituent of MurNAc 6-phosphate, producing GlcNAc 6-phosphate and D-lactate. Together with AnmK, is also required for the utilization of anhydro-N-acetylmuramic acid (anhMurNAc) either imported from the medium or derived from its own cell wall murein, and thus plays a role in cell wall recycling. This chain is N-acetylmuramic acid 6-phosphate etherase, found in Actinobacillus pleuropneumoniae serotype 7 (strain AP76).